We begin with the raw amino-acid sequence, 542 residues long: CTP synthase (542 aa).

Residues 1–265 (MTRFIFITGG…DVQVCRHFHL (265 aa)) form an amidoligase domain region. Position 13 (Ser13) interacts with CTP. Ser13 is a UTP binding site. Residues 14–19 (SLGKGL) and Asp71 contribute to the ATP site. Residues Asp71 and Glu139 each contribute to the Mg(2+) site. Residues 146–148 (DIE), 186–191 (KTKPTQ), and Lys222 contribute to the CTP site. UTP contacts are provided by residues 186–191 (KTKPTQ) and Lys222. In terms of domain architecture, Glutamine amidotransferase type-1 spans 291-541 (TIAVVGKYTS…VQAAITQSRL (251 aa)). Gly353 contributes to the L-glutamine binding site. Cys380 functions as the Nucleophile; for glutamine hydrolysis in the catalytic mechanism. L-glutamine-binding positions include 381–384 (FGMQ), Glu404, and Arg469. Catalysis depends on residues His514 and Glu516.

This sequence belongs to the CTP synthase family. In terms of assembly, homotetramer.

The catalysed reaction is UTP + L-glutamine + ATP + H2O = CTP + L-glutamate + ADP + phosphate + 2 H(+). The enzyme catalyses L-glutamine + H2O = L-glutamate + NH4(+). It carries out the reaction UTP + NH4(+) + ATP = CTP + ADP + phosphate + 2 H(+). The protein operates within pyrimidine metabolism; CTP biosynthesis via de novo pathway; CTP from UDP: step 2/2. Its activity is regulated as follows. Allosterically activated by GTP, when glutamine is the substrate; GTP has no effect on the reaction when ammonia is the substrate. The allosteric effector GTP functions by stabilizing the protein conformation that binds the tetrahedral intermediate(s) formed during glutamine hydrolysis. Inhibited by the product CTP, via allosteric rather than competitive inhibition. In terms of biological role, catalyzes the ATP-dependent amination of UTP to CTP with either L-glutamine or ammonia as the source of nitrogen. Regulates intracellular CTP levels through interactions with the four ribonucleotide triphosphates. The polypeptide is CTP synthase (Rhodospirillum rubrum (strain ATCC 11170 / ATH 1.1.1 / DSM 467 / LMG 4362 / NCIMB 8255 / S1)).